The primary structure comprises 276 residues: Ribosomal RNA small subunit methyltransferase A (276 aa).

Residues Asn-16, Leu-18, Gly-43, Glu-64, Asp-89, and Asn-109 each coordinate S-adenosyl-L-methionine.

It belongs to the class I-like SAM-binding methyltransferase superfamily. rRNA adenine N(6)-methyltransferase family. RsmA subfamily.

The protein localises to the cytoplasm. The catalysed reaction is adenosine(1518)/adenosine(1519) in 16S rRNA + 4 S-adenosyl-L-methionine = N(6)-dimethyladenosine(1518)/N(6)-dimethyladenosine(1519) in 16S rRNA + 4 S-adenosyl-L-homocysteine + 4 H(+). Specifically dimethylates two adjacent adenosines (A1518 and A1519) in the loop of a conserved hairpin near the 3'-end of 16S rRNA in the 30S particle. May play a critical role in biogenesis of 30S subunits. The polypeptide is Ribosomal RNA small subunit methyltransferase A (Marinobacter nauticus (strain ATCC 700491 / DSM 11845 / VT8) (Marinobacter aquaeolei)).